We begin with the raw amino-acid sequence, 718 residues long: Ribosomal RNA large subunit methyltransferase K/L (718 aa).

The 112-residue stretch at 44–155 folds into the THUMP domain; it reads DAYKVCIYSH…KQYVNVFLCL (112 aa).

It belongs to the methyltransferase superfamily. RlmKL family.

It localises to the cytoplasm. The catalysed reaction is guanosine(2445) in 23S rRNA + S-adenosyl-L-methionine = N(2)-methylguanosine(2445) in 23S rRNA + S-adenosyl-L-homocysteine + H(+). It catalyses the reaction guanosine(2069) in 23S rRNA + S-adenosyl-L-methionine = N(2)-methylguanosine(2069) in 23S rRNA + S-adenosyl-L-homocysteine + H(+). Functionally, specifically methylates the guanine in position 2445 (m2G2445) and the guanine in position 2069 (m7G2069) of 23S rRNA. This is Ribosomal RNA large subunit methyltransferase K/L from Francisella philomiragia subsp. philomiragia (strain ATCC 25017 / CCUG 19701 / FSC 153 / O#319-036).